Here is a 254-residue protein sequence, read N- to C-terminus: Chymotrypsin-like serine proteinase (254 aa).

Positions 1–18 are cleaved as a signal peptide; it reads MNALLNILLCTLAATALA. A propeptide spans 19 to 23 (activation peptide); it reads EISPN. The 231-residue stretch at 24-254 folds into the Peptidase S1 domain; that stretch reads IVGGSNAAAG…SSFYNWVQTQ (231 aa). C53 and C69 are disulfide-bonded. Active-site charge relay system residues include H68 and D117. Cystine bridges form between C146–C218, C181–C199, and C208–C233. Residue S212 is the Charge relay system of the active site.

The protein belongs to the peptidase S1 family. As to quaternary structure, monomer. As to expression, expressed specifically in the distal quarter of the intestine.

The protein resides in the secreted. It localises to the extracellular space. Its activity is regulated as follows. Activated by an autocatalytic mechanism. Specificity similar to chymotrypsin. This chain is Chymotrypsin-like serine proteinase, found in Haliotis rufescens (California red abalone).